The chain runs to 29 residues: Cytochrome b6-f complex subunit 8 (29 aa).

A helical transmembrane segment spans residues 3-23; it reads IVSIAWAALMVVFSFSLSLVV.

This sequence belongs to the PetN family. As to quaternary structure, the 4 large subunits of the cytochrome b6-f complex are cytochrome b6, subunit IV (17 kDa polypeptide, PetD), cytochrome f and the Rieske protein, while the 4 small subunits are PetG, PetL, PetM and PetN. The complex functions as a dimer.

Its subcellular location is the plastid. The protein resides in the chloroplast thylakoid membrane. Its function is as follows. Component of the cytochrome b6-f complex, which mediates electron transfer between photosystem II (PSII) and photosystem I (PSI), cyclic electron flow around PSI, and state transitions. In Phaseolus vulgaris (Kidney bean), this protein is Cytochrome b6-f complex subunit 8.